A 178-amino-acid chain; its full sequence is ATP synthase subunit delta (178 aa).

It belongs to the ATPase delta chain family. As to quaternary structure, F-type ATPases have 2 components, F(1) - the catalytic core - and F(0) - the membrane proton channel. F(1) has five subunits: alpha(3), beta(3), gamma(1), delta(1), epsilon(1). F(0) has three main subunits: a(1), b(2) and c(10-14). The alpha and beta chains form an alternating ring which encloses part of the gamma chain. F(1) is attached to F(0) by a central stalk formed by the gamma and epsilon chains, while a peripheral stalk is formed by the delta and b chains.

The protein localises to the cell inner membrane. In terms of biological role, f(1)F(0) ATP synthase produces ATP from ADP in the presence of a proton or sodium gradient. F-type ATPases consist of two structural domains, F(1) containing the extramembraneous catalytic core and F(0) containing the membrane proton channel, linked together by a central stalk and a peripheral stalk. During catalysis, ATP synthesis in the catalytic domain of F(1) is coupled via a rotary mechanism of the central stalk subunits to proton translocation. This protein is part of the stalk that links CF(0) to CF(1). It either transmits conformational changes from CF(0) to CF(1) or is implicated in proton conduction. This chain is ATP synthase subunit delta, found in Nitrosomonas europaea (strain ATCC 19718 / CIP 103999 / KCTC 2705 / NBRC 14298).